Consider the following 621-residue polypeptide: Complex I assembly factor ACAD9, mitochondrial (621 aa).

Residues 1-37 constitute a mitochondrion transit peptide; it reads MSGCGLFLRTTAAARACRGLVVSTANRRLLRTSPPVR. Lys41 is modified (N6-acetyllysine). Lys92 bears the N6-succinyllysine mark. The active-site Proton acceptor is Glu426. Thr478 is modified (phosphothreonine). Lys521 is modified (N6-acetyllysine; alternate). An N6-succinyllysine; alternate modification is found at Lys521.

The protein belongs to the acyl-CoA dehydrogenase family. As to quaternary structure, homodimer. Interacts with NDUFAF1 and ECSIT. Part of the mitochondrial complex I assembly/MCIA complex that comprises at least the core subunits TMEM126B, NDUFAF1, ECSIT and ACAD9 and complement subunits such as COA1 and TMEM186. Interacts with TMEM70 and TMEM242. FAD is required as a cofactor. Ubiquitously expressed in most normal human tissues and cancer cell lines with high level of expression in heart, skeletal muscles, brain, kidney and liver. In the cerebellum uniquely expressed in the granular layer (at protein level).

It is found in the mitochondrion inner membrane. The catalysed reaction is eicosanoyl-CoA + oxidized [electron-transfer flavoprotein] + H(+) = (2E)-eicosenoyl-CoA + reduced [electron-transfer flavoprotein]. It catalyses the reaction octadecanoyl-CoA + oxidized [electron-transfer flavoprotein] + H(+) = (2E)-octadecenoyl-CoA + reduced [electron-transfer flavoprotein]. It carries out the reaction oxidized [electron-transfer flavoprotein] + hexadecanoyl-CoA + H(+) = (2E)-hexadecenoyl-CoA + reduced [electron-transfer flavoprotein]. The enzyme catalyses decanoyl-CoA + oxidized [electron-transfer flavoprotein] + H(+) = (2E)-decenoyl-CoA + reduced [electron-transfer flavoprotein]. The catalysed reaction is nonanoyl-CoA + oxidized [electron-transfer flavoprotein] + H(+) = (2E)-nonenoyl-CoA + reduced [electron-transfer flavoprotein]. It catalyses the reaction pentadecanoyl-CoA + oxidized [electron-transfer flavoprotein] + H(+) = (2E)-pentadecenoyl-CoA + reduced [electron-transfer flavoprotein]. It carries out the reaction undecanoyl-CoA + oxidized [electron-transfer flavoprotein] + H(+) = trans-2-undecenoyl-CoA + reduced [electron-transfer flavoprotein]. The enzyme catalyses (9Z)-hexadecenoyl-CoA + oxidized [electron-transfer flavoprotein] + H(+) = (2E,9Z)-hexadecadienoyl-CoA + reduced [electron-transfer flavoprotein]. The catalysed reaction is heptadecanoyl-CoA + oxidized [electron-transfer flavoprotein] + H(+) = trans-2-heptadecenoyl-CoA + reduced [electron-transfer flavoprotein]. It catalyses the reaction (9E)-octadecenoyl-CoA + oxidized [electron-transfer flavoprotein] + H(+) = (2E,9E)-octadecadienoyl-CoA + reduced [electron-transfer flavoprotein]. It carries out the reaction oxidized [electron-transfer flavoprotein] + (9Z)-octadecenoyl-CoA + H(+) = (2E,9Z)-octadecadienoyl-CoA + reduced [electron-transfer flavoprotein]. The enzyme catalyses (9Z,12Z)-octadecadienoyl-CoA + oxidized [electron-transfer flavoprotein] + H(+) = (2E,9Z,12Z)-octadecatrienoyl-CoA + reduced [electron-transfer flavoprotein]. The catalysed reaction is (4Z,7Z,10Z,13Z,16Z,19Z)-docosahexaenoyl-CoA + oxidized [electron-transfer flavoprotein] + H(+) = (2E,4Z,7Z,10Z,13Z,16Z,19Z)-docosaheptaenoyl-CoA + reduced [electron-transfer flavoprotein]. It catalyses the reaction tetradecanoyl-CoA + oxidized [electron-transfer flavoprotein] + H(+) = (2E)-tetradecenoyl-CoA + reduced [electron-transfer flavoprotein]. In terms of biological role, as part of the MCIA complex, primarily participates in the assembly of the mitochondrial complex I and therefore plays a role in oxidative phosphorylation. This moonlighting protein also has a dehydrogenase activity toward a broad range of substrates with greater specificity for long-chain unsaturated acyl-CoAs. However, in vivo, it does not seem to play a primary role in fatty acid oxidation. In addition, the function in complex I assembly is independent of the dehydrogenase activity of the protein. In Homo sapiens (Human), this protein is Complex I assembly factor ACAD9, mitochondrial.